Reading from the N-terminus, the 50-residue chain is Large ribosomal subunit protein bL33 (50 aa).

The protein belongs to the bacterial ribosomal protein bL33 family.

This chain is Large ribosomal subunit protein bL33, found in Hydrogenovibrio crunogenus (strain DSM 25203 / XCL-2) (Thiomicrospira crunogena).